Reading from the N-terminus, the 544-residue chain is Chaperonin GroEL (544 aa).

ATP contacts are provided by residues 30–33 (TLGP), Lys-51, 87–91 (DGTTT), Gly-415, and Asp-495.

Belongs to the chaperonin (HSP60) family. As to quaternary structure, forms a cylinder of 14 subunits composed of two heptameric rings stacked back-to-back. Interacts with the co-chaperonin GroES.

It is found in the cell outer membrane. It carries out the reaction ATP + H2O + a folded polypeptide = ADP + phosphate + an unfolded polypeptide.. Functionally, together with its co-chaperonin GroES, plays an essential role in assisting protein folding. The GroEL-GroES system forms a nano-cage that allows encapsulation of the non-native substrate proteins and provides a physical environment optimized to promote and accelerate protein folding. The polypeptide is Chaperonin GroEL (Neisseria gonorrhoeae).